A 214-amino-acid polypeptide reads, in one-letter code: Thiamine-phosphate synthase (214 aa).

Residues 37-41 and Asn-73 contribute to the 4-amino-2-methyl-5-(diphosphooxymethyl)pyrimidine site; that span reads QYREK. Mg(2+) contacts are provided by Asp-74 and Asp-93. Ser-112 contributes to the 4-amino-2-methyl-5-(diphosphooxymethyl)pyrimidine binding site. Residue 139–141 participates in 2-[(2R,5Z)-2-carboxy-4-methylthiazol-5(2H)-ylidene]ethyl phosphate binding; that stretch reads TIS. Lys-142 serves as a coordination point for 4-amino-2-methyl-5-(diphosphooxymethyl)pyrimidine. Residues Gly-171 and 191–192 each bind 2-[(2R,5Z)-2-carboxy-4-methylthiazol-5(2H)-ylidene]ethyl phosphate; that span reads IS.

It belongs to the thiamine-phosphate synthase family. The cofactor is Mg(2+).

It carries out the reaction 2-[(2R,5Z)-2-carboxy-4-methylthiazol-5(2H)-ylidene]ethyl phosphate + 4-amino-2-methyl-5-(diphosphooxymethyl)pyrimidine + 2 H(+) = thiamine phosphate + CO2 + diphosphate. The enzyme catalyses 2-(2-carboxy-4-methylthiazol-5-yl)ethyl phosphate + 4-amino-2-methyl-5-(diphosphooxymethyl)pyrimidine + 2 H(+) = thiamine phosphate + CO2 + diphosphate. The catalysed reaction is 4-methyl-5-(2-phosphooxyethyl)-thiazole + 4-amino-2-methyl-5-(diphosphooxymethyl)pyrimidine + H(+) = thiamine phosphate + diphosphate. The protein operates within cofactor biosynthesis; thiamine diphosphate biosynthesis; thiamine phosphate from 4-amino-2-methyl-5-diphosphomethylpyrimidine and 4-methyl-5-(2-phosphoethyl)-thiazole: step 1/1. Functionally, condenses 4-methyl-5-(beta-hydroxyethyl)thiazole monophosphate (THZ-P) and 2-methyl-4-amino-5-hydroxymethyl pyrimidine pyrophosphate (HMP-PP) to form thiamine monophosphate (TMP). The chain is Thiamine-phosphate synthase from Listeria monocytogenes serotype 4b (strain F2365).